Reading from the N-terminus, the 34-residue chain is Photosystem II reaction center protein M (34 aa).

A helical transmembrane segment spans residues 5-25 (ILAFIATALFILVPTAFLLII).

The protein belongs to the PsbM family. As to quaternary structure, PSII is composed of 1 copy each of membrane proteins PsbA, PsbB, PsbC, PsbD, PsbE, PsbF, PsbH, PsbI, PsbJ, PsbK, PsbL, PsbM, PsbT, PsbX, PsbY, PsbZ, Psb30/Ycf12, at least 3 peripheral proteins of the oxygen-evolving complex and a large number of cofactors. It forms dimeric complexes.

It localises to the plastid. Its subcellular location is the chloroplast thylakoid membrane. One of the components of the core complex of photosystem II (PSII). PSII is a light-driven water:plastoquinone oxidoreductase that uses light energy to abstract electrons from H(2)O, generating O(2) and a proton gradient subsequently used for ATP formation. It consists of a core antenna complex that captures photons, and an electron transfer chain that converts photonic excitation into a charge separation. This subunit is found at the monomer-monomer interface. The chain is Photosystem II reaction center protein M from Ceratophyllum demersum (Rigid hornwort).